The chain runs to 325 residues: Tetraacyldisaccharide 4'-kinase (325 aa).

ATP is bound at residue 54 to 61 (SVGGTGKT).

The protein belongs to the LpxK family.

The enzyme catalyses a lipid A disaccharide + ATP = a lipid IVA + ADP + H(+). Its pathway is glycolipid biosynthesis; lipid IV(A) biosynthesis; lipid IV(A) from (3R)-3-hydroxytetradecanoyl-[acyl-carrier-protein] and UDP-N-acetyl-alpha-D-glucosamine: step 6/6. Transfers the gamma-phosphate of ATP to the 4'-position of a tetraacyldisaccharide 1-phosphate intermediate (termed DS-1-P) to form tetraacyldisaccharide 1,4'-bis-phosphate (lipid IVA). The chain is Tetraacyldisaccharide 4'-kinase from Rickettsia akari (strain Hartford).